The primary structure comprises 379 residues: Alcohol dehydrogenase 1 (379 aa).

Cysteine 47, threonine 49, histidine 69, cysteine 99, cysteine 102, cysteine 105, cysteine 113, and cysteine 177 together coordinate Zn(2+). An alcohol is bound by residues threonine 49 and histidine 69. Threonine 49 is an NAD(+) binding site. NAD(+)-binding positions include 202 to 207 (GLGAVG), aspartate 226, arginine 231, threonine 272, valine 295, 295 to 297 (VGV), phenylalanine 322, and arginine 372.

The protein belongs to the zinc-containing alcohol dehydrogenase family. As to quaternary structure, homodimer. Requires Zn(2+) as cofactor.

It is found in the cytoplasm. The catalysed reaction is a primary alcohol + NAD(+) = an aldehyde + NADH + H(+). It carries out the reaction a secondary alcohol + NAD(+) = a ketone + NADH + H(+). The sequence is that of Alcohol dehydrogenase 1 (ADH1) from Oryza sativa subsp. indica (Rice).